Consider the following 318-residue polypeptide: Aquaporin-1 (318 aa).

The span at 1-16 shows a compositional bias: polar residues; sequence MVQFGSRANTNMTGLP. Positions 1–27 are disordered; that stretch reads MVQFGSRANTNMTGLPTEQAVEDRRVG. Over 1-36 the chain is Cytoplasmic; that stretch reads MVQFGSRANTNMTGLPTEQAVEDRRVGNPKRDRMRN. Residues 37–57 form a helical membrane-spanning segment; the sequence is ALVIVLGEFCGTFMFLLLSFI. Over 58 to 77 the chain is Extracellular; sequence GAQTALVTNSPSDAGSPLLP. A helical transmembrane segment spans residues 78 to 98; sequence FSLMYIAASFGTALAVNVWIF. Topologically, residues 99 to 108 are cytoplasmic; the sequence is YRVSGGMFNP. An NPA 1 motif is present at residues 107–109; sequence NPA. A helical membrane pass occupies residues 109-129; it reads AVTLGLVLVGAVTPIHALLII. At 130–165 the chain is on the extracellular side; the sequence is PTQLVAAITAAGITDALLPGKLLVTNALGNGTSVAQ. Asparagine 159 is a glycosylation site (N-linked (GlcNAc...) asparagine). Residues 166–186 form a helical membrane-spanning segment; it reads GVFIEMFLTSQLVLTVYFLAV. Topologically, residues 187 to 193 are cytoplasmic; sequence EKHRSTH. A helical transmembrane segment spans residues 194–214; sequence LAPIGIGISVFIAHICATNWT. The Extracellular portion of the chain corresponds to 215-236; the sequence is GTSINPARSFGPSVVAGFHGYD. Positions 219–221 match the NPA 2 motif; sequence NPA. A helical transmembrane segment spans residues 237 to 257; that stretch reads WIYYIGPFMGSLLAFGCYKIF. The Cytoplasmic portion of the chain corresponds to 258–318; that stretch reads KVLEYQTANP…NDSVIDDQMV (61 aa). The segment at 268–318 is disordered; it reads GQDDDNLDRSGHHHFFGHRKEPMPHTHTDNIEPKDHGVPQRNDSVIDDQMV. Basic and acidic residues predominate over residues 285–305; sequence HRKEPMPHTHTDNIEPKDHGV.

The protein belongs to the MIP/aquaporin (TC 1.A.8) family.

The protein localises to the nucleus membrane. It catalyses the reaction H2O(in) = H2O(out). Its function is as follows. Probable water channel involved in responses to changes in environmental conditions and conidiation. Involved in responses to hyperosmotic conditions, oxidative stress and cell wall destabilization. Also required for proper transcriptional activation of genes involved in aurofusarin biosynthesis. Not involved in pathogenicity, but negatively regulates deoxynivalenol (DON) production. The polypeptide is Aquaporin-1 (Gibberella zeae (strain ATCC MYA-4620 / CBS 123657 / FGSC 9075 / NRRL 31084 / PH-1) (Wheat head blight fungus)).